Here is a 490-residue protein sequence, read N- to C-terminus: Cyclin-A2-1 (490 aa).

Positions 34–76 are disordered; that stretch reads FAPSVSLPARTERKQTAKGKTKRGALDEITSASTATSAPQPKR. Residues 63-72 are compositionally biased toward polar residues; the sequence is TSASTATSAP.

It belongs to the cyclin family. Cyclin AB subfamily.

The protein is Cyclin-A2-1 (CYCA2-1) of Oryza sativa subsp. japonica (Rice).